The primary structure comprises 377 residues: Putative glutamate--cysteine ligase 2 (377 aa).

It belongs to the glutamate--cysteine ligase type 2 family. YbdK subfamily.

It catalyses the reaction L-cysteine + L-glutamate + ATP = gamma-L-glutamyl-L-cysteine + ADP + phosphate + H(+). ATP-dependent carboxylate-amine ligase which exhibits weak glutamate--cysteine ligase activity. This Ralstonia pickettii (strain 12J) protein is Putative glutamate--cysteine ligase 2.